A 402-amino-acid polypeptide reads, in one-letter code: MTSNPLEQLTIEQLQCRTSMKWRAHPEDVLPLWVAEMDVLLAPTVAEAVHRAVDNGDTGYPYGTTFAEAISEFASQRWQWHDLDVSRTAIVPDVMLGVVEMLRLITDRGDGVIVSPPVYPPFYAFVTHDGRRVLEAPLGRDGRLDLAALQDAFSRARRSSGPNGKVAYLLCNPHNPTGSVHTVAELHGVAELARRFGVRVISDEIHAPLVLSGARFTPYLSIPGAENAFALMSATKGWNLCGLKAAIAIAGREAAADLRRIPKEVSHGPSHLGIIAHTAAFRTGSSWLDALLQGLEANRALLRDLVTKHLPGVRYQRPQGTYLTWLDCRHLGFDEQINEGLAAISDLSGPARWFLDHSRVALTSGHAFGTGGVGHVRVNFATSQAILIEALSRMGRALVNFR.

N6-(pyridoxal phosphate)lysine is present on Lys236.

It belongs to the class-II pyridoxal-phosphate-dependent aminotransferase family. MalY/PatB cystathionine beta-lyase subfamily. Pyridoxal 5'-phosphate serves as cofactor.

The enzyme catalyses L,L-cystathionine + H2O = L-homocysteine + pyruvate + NH4(+). It carries out the reaction an S-substituted L-cysteine + H2O = a thiol + pyruvate + NH4(+). It participates in amino-acid biosynthesis; L-methionine biosynthesis via de novo pathway; L-homocysteine from L-cystathionine: step 1/1. The sequence is that of Putative cystathionine beta-lyase from Mycobacterium leprae (strain TN).